A 443-amino-acid chain; its full sequence is Tol-Pal system protein TolB (443 aa).

Residues 1–33 form the signal peptide; sequence MKIGIINTKIRTVFSAFACMIAASLVCTMPARA.

Belongs to the TolB family. As to quaternary structure, the Tol-Pal system is composed of five core proteins: the inner membrane proteins TolA, TolQ and TolR, the periplasmic protein TolB and the outer membrane protein Pal. They form a network linking the inner and outer membranes and the peptidoglycan layer.

The protein localises to the periplasm. Its function is as follows. Part of the Tol-Pal system, which plays a role in outer membrane invagination during cell division and is important for maintaining outer membrane integrity. This Brucella ovis (strain ATCC 25840 / 63/290 / NCTC 10512) protein is Tol-Pal system protein TolB.